We begin with the raw amino-acid sequence, 225 residues long: Biosynthetic peptidoglycan transglycosylase (225 aa).

A helical transmembrane segment spans residues 8-28; that stretch reads VLLIFIGAILLIQLWIFSSLV.

This sequence belongs to the glycosyltransferase 51 family.

It localises to the cell inner membrane. It carries out the reaction [GlcNAc-(1-&gt;4)-Mur2Ac(oyl-L-Ala-gamma-D-Glu-L-Lys-D-Ala-D-Ala)](n)-di-trans,octa-cis-undecaprenyl diphosphate + beta-D-GlcNAc-(1-&gt;4)-Mur2Ac(oyl-L-Ala-gamma-D-Glu-L-Lys-D-Ala-D-Ala)-di-trans,octa-cis-undecaprenyl diphosphate = [GlcNAc-(1-&gt;4)-Mur2Ac(oyl-L-Ala-gamma-D-Glu-L-Lys-D-Ala-D-Ala)](n+1)-di-trans,octa-cis-undecaprenyl diphosphate + di-trans,octa-cis-undecaprenyl diphosphate + H(+). Its pathway is cell wall biogenesis; peptidoglycan biosynthesis. Its function is as follows. Peptidoglycan polymerase that catalyzes glycan chain elongation from lipid-linked precursors. The polypeptide is Biosynthetic peptidoglycan transglycosylase (Acinetobacter baumannii (strain AB307-0294)).